Reading from the N-terminus, the 362-residue chain is uncharacterized protein (362 aa).

At A2 the chain carries N-acetylalanine.

Belongs to the Gfo/Idh/MocA family. In terms of assembly, homodimer.

This is an uncharacterized protein from Arabidopsis thaliana (Mouse-ear cress).